Consider the following 914-residue polypeptide: UPF0182 protein PTH_1387 (914 aa).

A run of 7 helical transmembrane segments spans residues 7–27 (FAAY…IAGA), 48–68 (IIIS…VLLF), 109–129 (LLLL…NFTV), 173–193 (INWV…VVYF), 209–229 (YHFS…YQLE), 252–272 (TLLA…AILI), and 281–301 (LVIY…GIYP).

The protein belongs to the UPF0182 family.

Its subcellular location is the cell membrane. This Pelotomaculum thermopropionicum (strain DSM 13744 / JCM 10971 / SI) protein is UPF0182 protein PTH_1387.